Reading from the N-terminus, the 653-residue chain is Polyadenylate-binding protein, cytoplasmic and nuclear (653 aa).

Residues 1 to 10 (MPSTDLKKQA) show a composition bias toward basic and acidic residues. The interval 1–77 (MPSTDLKKQA…SVATPSGTAP (77 aa)) is disordered. A compositionally biased stretch (polar residues) spans 17 to 27 (DVNTNNEAVES). Residues 53–68 (AAEPSESTSTPTNASS) show a composition bias toward low complexity. Residues 80-158 (ASLYVGELDP…RPCRIMWSQR (79 aa)) enclose the RRM 1 domain. A Phosphothreonine modification is found at Thr-167. 3 consecutive RRM domains span residues 168–245 (GNVF…HHVS), 261–338 (TNVY…RAQK), and 364–441 (VNLF…LAQR). In terms of domain architecture, PABC spans 569 to 646 (PERFTAADLA…AIGVLQEFVD (78 aa)).

The protein belongs to the polyadenylate-binding protein type-1 family. Interacts with cid13.

It is found in the cytoplasm. Its subcellular location is the nucleus. In terms of biological role, binds the poly(A) tail of mRNA. Appears to be an important mediator of the multiple roles of the poly(A) tail in mRNA biogenesis, stability and translation. In the nucleus, involved in both mRNA cleavage and polyadenylation. Is also required for efficient mRNA export to the cytoplasm. Acts in concert with a poly(A)-specific nuclease (PAN) to affect poly(A) tail shortening, which may occur concomitantly with either nucleocytoplasmic mRNA transport or translational initiation. In the cytoplasm, stimulates translation initiation and regulates mRNA decay through translation termination-coupled poly(A) shortening, probably mediated by PAN. This chain is Polyadenylate-binding protein, cytoplasmic and nuclear (pab1), found in Schizosaccharomyces pombe (strain 972 / ATCC 24843) (Fission yeast).